A 159-amino-acid polypeptide reads, in one-letter code: Putative transcriptional regulatory protein rrnAC0199 (159 aa).

Belongs to the Tfx family.

In terms of biological role, putative transcriptional regulator. The protein is Putative transcriptional regulatory protein rrnAC0199 of Haloarcula marismortui (strain ATCC 43049 / DSM 3752 / JCM 8966 / VKM B-1809) (Halobacterium marismortui).